The primary structure comprises 201 residues: Recombination protein RecR (201 aa).

Residues 60–75 (CSRCFHFTDAEECSIC) form a C4-type zinc finger. The region spanning 83 to 178 (GEICVVETTA…RVSRIAYGIP (96 aa)) is the Toprim domain.

It belongs to the RecR family.

Functionally, may play a role in DNA repair. It seems to be involved in an RecBC-independent recombinational process of DNA repair. It may act with RecF and RecO. This chain is Recombination protein RecR, found in Syntrophobacter fumaroxidans (strain DSM 10017 / MPOB).